The primary structure comprises 297 residues: MLNGIVVVNKPRGVTSSDCVYKLRKILQIRKIGHAGTLDPEVNGVLPIAIGQATKLIELMHEKPKSYIGSGMFGRATDSYDLDGKTIAEEKINTPFTSNEIIAGMEKLTGKLEQVPPIYSAVRVNGKRLYEYARENIPVERPKRKVNVYSYELTQDPEYDPLEKTESFNFAIRCSKGTYVRSLVNDLGEELGVPAVMTSLTRTSSSGYDLNQAVDLETIEAEIDTPGKWLQPIDSFFAELPQLQLSPDQFKRVSNGASISLNTSYAKVALVYNGHIKAIYRRQGKIYRPEMMLLKNE.

Catalysis depends on Asp-39, which acts as the Nucleophile.

The protein belongs to the pseudouridine synthase TruB family. Type 1 subfamily.

It catalyses the reaction uridine(55) in tRNA = pseudouridine(55) in tRNA. In terms of biological role, responsible for synthesis of pseudouridine from uracil-55 in the psi GC loop of transfer RNAs. This chain is tRNA pseudouridine synthase B, found in Lactobacillus gasseri (strain ATCC 33323 / DSM 20243 / BCRC 14619 / CIP 102991 / JCM 1131 / KCTC 3163 / NCIMB 11718 / NCTC 13722 / AM63).